The chain runs to 229 residues: 23 kDa piroplasm membrane protein (229 aa).

Residues 1–19 form the signal peptide; the sequence is MNKYFKVFFFVLLTHALKS. At 20–203 the chain is on the extracellular side; the sequence is SLIFGQATLQ…EKEETSKKKY (184 aa). The chain crosses the membrane as a helical span at residues 204-224; it reads VLMVVVVVVFVVVASLVVFLV. Over 225 to 229 the chain is Cytoplasmic; it reads KFCLK.

The protein localises to the membrane. The polypeptide is 23 kDa piroplasm membrane protein (Theileria annulata).